The following is a 605-amino-acid chain: DNA primase (605 aa).

The CHC2-type zinc-finger motif lies at 38–62 (CPFHDEKTPSFTVSEDKQICHCFGC). A Toprim domain is found at 260 to 341 (DEIVLLEGFM…NVFVIQLPSG (82 aa)). Residues Glu-266, Asp-310, and Asp-312 each coordinate Mg(2+).

This sequence belongs to the DnaG primase family. As to quaternary structure, monomer. Interacts with DnaB. It depends on Zn(2+) as a cofactor. Requires Mg(2+) as cofactor.

It catalyses the reaction ssDNA + n NTP = ssDNA/pppN(pN)n-1 hybrid + (n-1) diphosphate.. Its function is as follows. RNA polymerase that catalyzes the synthesis of short RNA molecules used as primers for DNA polymerase during DNA replication. The protein is DNA primase of Staphylococcus aureus (strain MW2).